The primary structure comprises 183 residues: ADP-ribosylation factor-like protein 1 (183 aa).

A lipid anchor (N-myristoyl glycine) is attached at G2. GTP is bound by residues 25–32 (GLDGAGKT), 68–72 (DLGGQ), and 127–130 (NKQD).

It belongs to the small GTPase superfamily. Arf family. Homodimer. Interacts with IMH1 (via GRIP domain); the interaction is dependent on GTP. Interacts with MON2.

It is found in the golgi apparatus. Recruits golgins such as IMH1 to the Golgi. Can bind and hydrolyze GTP. May be involved in trafficking events within the endosomal system. The sequence is that of ADP-ribosylation factor-like protein 1 (ARL1) from Saccharomyces cerevisiae (strain ATCC 204508 / S288c) (Baker's yeast).